The chain runs to 951 residues: Valine--tRNA ligase (951 aa).

Positions 42-52 match the 'HIGH' region motif; sequence PNVTGSLHMGH. A 'KMSKS' region motif is present at residues 554–558; that stretch reads KMSKS. Position 557 (lysine 557) interacts with ATP. The stretch at 882-951 forms a coiled coil; the sequence is LIDKDAELAR…EEQKATIAAL (70 aa).

Belongs to the class-I aminoacyl-tRNA synthetase family. ValS type 1 subfamily. In terms of assembly, monomer.

The protein resides in the cytoplasm. It carries out the reaction tRNA(Val) + L-valine + ATP = L-valyl-tRNA(Val) + AMP + diphosphate. Catalyzes the attachment of valine to tRNA(Val). As ValRS can inadvertently accommodate and process structurally similar amino acids such as threonine, to avoid such errors, it has a 'posttransfer' editing activity that hydrolyzes mischarged Thr-tRNA(Val) in a tRNA-dependent manner. The polypeptide is Valine--tRNA ligase (Vibrio vulnificus (strain CMCP6)).